A 338-amino-acid polypeptide reads, in one-letter code: DNA-directed RNA polymerase subunit alpha (338 aa).

The interval 1-234 is alpha N-terminal domain (alpha-NTD); that stretch reads MIHKNWQELI…DQLSIFVNFD (234 aa). Residues 250–338 form an alpha C-terminal domain (alpha-CTD) region; the sequence is FNPLLLKKVD…ELAKKYEDNF (89 aa).

The protein belongs to the RNA polymerase alpha chain family. In terms of assembly, homodimer. The RNAP catalytic core consists of 2 alpha, 1 beta, 1 beta' and 1 omega subunit. When a sigma factor is associated with the core the holoenzyme is formed, which can initiate transcription.

The enzyme catalyses RNA(n) + a ribonucleoside 5'-triphosphate = RNA(n+1) + diphosphate. Its function is as follows. DNA-dependent RNA polymerase catalyzes the transcription of DNA into RNA using the four ribonucleoside triphosphates as substrates. The sequence is that of DNA-directed RNA polymerase subunit alpha from Jannaschia sp. (strain CCS1).